We begin with the raw amino-acid sequence, 967 residues long: RNA polymerase-associated protein RapA (967 aa).

One can recognise a Helicase ATP-binding domain in the interval 163–333 (EVGQRHAPRV…FARLRLLDPN (171 aa)). 176-183 (DEVGLGKT) is an ATP binding site. The DEAH box motif lies at 279–282 (DEAH). In terms of domain architecture, Helicase C-terminal spans 489–677 (RVEWLLNYLT…TCRQQHDSLK (189 aa)).

This sequence belongs to the SNF2/RAD54 helicase family. RapA subfamily. In terms of assembly, interacts with the RNAP. Has a higher affinity for the core RNAP than for the holoenzyme. Its ATPase activity is stimulated by binding to RNAP.

In terms of biological role, transcription regulator that activates transcription by stimulating RNA polymerase (RNAP) recycling in case of stress conditions such as supercoiled DNA or high salt concentrations. Probably acts by releasing the RNAP, when it is trapped or immobilized on tightly supercoiled DNA. Does not activate transcription on linear DNA. Probably not involved in DNA repair. The sequence is that of RNA polymerase-associated protein RapA from Pectobacterium atrosepticum (strain SCRI 1043 / ATCC BAA-672) (Erwinia carotovora subsp. atroseptica).